We begin with the raw amino-acid sequence, 157 residues long: SsrA-binding protein (157 aa).

It belongs to the SmpB family.

The protein localises to the cytoplasm. Functionally, required for rescue of stalled ribosomes mediated by trans-translation. Binds to transfer-messenger RNA (tmRNA), required for stable association of tmRNA with ribosomes. tmRNA and SmpB together mimic tRNA shape, replacing the anticodon stem-loop with SmpB. tmRNA is encoded by the ssrA gene; the 2 termini fold to resemble tRNA(Ala) and it encodes a 'tag peptide', a short internal open reading frame. During trans-translation Ala-aminoacylated tmRNA acts like a tRNA, entering the A-site of stalled ribosomes, displacing the stalled mRNA. The ribosome then switches to translate the ORF on the tmRNA; the nascent peptide is terminated with the 'tag peptide' encoded by the tmRNA and targeted for degradation. The ribosome is freed to recommence translation, which seems to be the essential function of trans-translation. This Limosilactobacillus reuteri (strain DSM 20016) (Lactobacillus reuteri) protein is SsrA-binding protein.